We begin with the raw amino-acid sequence, 336 residues long: Dihydroorotate dehydrogenase (quinone) (336 aa).

FMN contacts are provided by residues 62–66 (AGLDK) and threonine 86. Lysine 66 lines the substrate pocket. Residue 111-115 (NRMGF) coordinates substrate. 2 residues coordinate FMN: asparagine 139 and asparagine 172. Asparagine 172 contacts substrate. The Nucleophile role is filled by serine 175. Asparagine 177 contacts substrate. FMN contacts are provided by lysine 217 and threonine 245. 246 to 247 (NT) contacts substrate. Residues glycine 268, glycine 297, and 318–319 (YS) each bind FMN.

This sequence belongs to the dihydroorotate dehydrogenase family. Type 2 subfamily. As to quaternary structure, monomer. FMN is required as a cofactor.

Its subcellular location is the cell membrane. It carries out the reaction (S)-dihydroorotate + a quinone = orotate + a quinol. The protein operates within pyrimidine metabolism; UMP biosynthesis via de novo pathway; orotate from (S)-dihydroorotate (quinone route): step 1/1. Catalyzes the conversion of dihydroorotate to orotate with quinone as electron acceptor. The chain is Dihydroorotate dehydrogenase (quinone) from Yersinia pseudotuberculosis serotype O:1b (strain IP 31758).